The primary structure comprises 1322 residues: Protein fantom (1322 aa).

The N-terminal stretch at 1–22 (MVSARYPIEKWSRPQLEDHFHN) is a signal peptide. Residues 15 to 89 (QLEDHFHNVV…MKLKAAKQQL (75 aa)) are a coiled coil. Residues 108 to 119 (RSTFRQPPSTFR) show a composition bias toward polar residues. Disordered stretches follow at residues 108–151 (RSTF…GEKL), 189–275 (KSSV…PDQT), and 392–418 (RIEE…SQSE). The span at 195-217 (SSPPTRLSTSSSSKSSSSNNNND) shows a compositional bias: low complexity. The span at 224–234 (ELEEMSEMSDD) shows a compositional bias: acidic residues. Residues 274 to 362 (QTEKVLLDKL…EDQKKFEAMR (89 aa)) adopt a coiled-coil conformation. Residues 456 to 538 (ASENSLARWQ…FMLEEQIRTI (83 aa)) adopt a coiled-coil conformation. Disordered regions lie at residues 891–1094 (AELH…KPRN) and 1121–1149 (TDPL…PVPL). Residues 918–927 (TDSSDTSFSH) show a composition bias toward low complexity. Residues 956–975 (SDGEEEADRIVFDDDDDEIE) show a composition bias toward acidic residues. The segment covering 984–996 (RDPEPLEVPERQV) has biased composition (basic and acidic residues). A compositionally biased stretch (polar residues) spans 1015–1029 (NGTNESKESTPVTQR). Acidic residues predominate over residues 1042-1067 (PELEPESGPEPEPVVESEPNEVAETE). The segment covering 1068–1080 (EDRKRELKTEELK) has biased composition (basic and acidic residues). The span at 1127-1139 (SVPPSESSSTSSP) shows a compositional bias: low complexity.

Belongs to the RPGRIP1 family. Expressed at the transition zone at the base of cilia. Expressed in ciliated sensory neurons, including the amphid neurons in the head.

The protein localises to the cell projection. Its subcellular location is the cilium. Functionally, thought to have an important role in cilia formation and cilia-mediated chemosensation. Involved in the docking of other MKS/MKSR proteins localized to the transition zone of the cilia. This Caenorhabditis elegans protein is Protein fantom (mks-5).